A 373-amino-acid polypeptide reads, in one-letter code: Pollen allergen KBG 31 (373 aa).

An N-terminal signal peptide occupies residues 1–28; the sequence is MDKANGAYKTALKAASAVAPAEKFPVFQ.

It belongs to the Poa p IX/Phl p VI allergen family. As to expression, pollen.

This is Pollen allergen KBG 31 from Poa pratensis (Kentucky bluegrass).